A 434-amino-acid chain; its full sequence is Cyclic 2,3-diphosphoglycerate synthetase (434 aa).

Belongs to the cyclic 2,3-diphosphoglycerate synthetase family.

The protein resides in the cytoplasm. The enzyme catalyses (2R)-2,3-bisphosphoglycerate + ATP + H(+) = cyclic (2R)-2,3-bisphosphoglycerate + ADP + phosphate. Catalyzes the formation of cyclic 2,3-diphosphoglycerate (cDPG) by formation of an intramolecular phosphoanhydride bond at the expense of ATP. The protein is Cyclic 2,3-diphosphoglycerate synthetase of Thermococcus sibiricus (strain DSM 12597 / MM 739).